The sequence spans 464 residues: Cysteine--tRNA ligase (464 aa).

Residue Cys-28 participates in Zn(2+) binding. The 'HIGH' region motif lies at 30–40 (PTVYDTAHIGN). Zn(2+) is bound by residues Cys-212, His-237, and Glu-241. Residues 270 to 274 (KMSKS) carry the 'KMSKS' region motif. Lys-273 is an ATP binding site.

The protein belongs to the class-I aminoacyl-tRNA synthetase family. As to quaternary structure, monomer. Zn(2+) is required as a cofactor.

It localises to the cytoplasm. It catalyses the reaction tRNA(Cys) + L-cysteine + ATP = L-cysteinyl-tRNA(Cys) + AMP + diphosphate. In Wolbachia pipientis subsp. Culex pipiens (strain wPip), this protein is Cysteine--tRNA ligase.